An 83-amino-acid chain; its full sequence is MKQRNNAKRVRLEQTRRPKKNPLKAAGIEKVDYKDINTLRQFISDRHKIRSRRVTGLTPQQQREVATAVKNAREMALLPFTSR.

Residues 1–23 form a disordered region; it reads MKQRNNAKRVRLEQTRRPKKNPL.

It belongs to the bacterial ribosomal protein bS18 family. Part of the 30S ribosomal subunit. Forms a tight heterodimer with protein bS6.

Functionally, binds as a heterodimer with protein bS6 to the central domain of the 16S rRNA, where it helps stabilize the platform of the 30S subunit. The polypeptide is Small ribosomal subunit protein bS18 (Corynebacterium efficiens (strain DSM 44549 / YS-314 / AJ 12310 / JCM 11189 / NBRC 100395)).